A 126-amino-acid chain; its full sequence is Fumarate reductase subunit C (126 aa).

3 helical membrane-spanning segments follow: residues 30-50 (IFVA…GAGG), 64-84 (VVVV…VTWF), and 105-125 (VLAG…WMVL).

This sequence belongs to the FrdC family. Part of an enzyme complex containing four subunits: a flavoprotein (FrdA), an iron-sulfur protein (FrdB), and two hydrophobic anchor proteins (FrdC and FrdD).

Its subcellular location is the cell membrane. Its function is as follows. Anchors the catalytic components of the fumarate reductase complex to the cell membrane, binds quinones. In Mycobacterium tuberculosis (strain CDC 1551 / Oshkosh), this protein is Fumarate reductase subunit C.